The sequence spans 401 residues: Dual-specificity RNA methyltransferase RlmN (401 aa).

Catalysis depends on Glu114, which acts as the Proton acceptor. The region spanning 120–365 (DKGRGTLCVS…TIVRRTRGDD (246 aa)) is the Radical SAM core domain. Residues Cys127 and Cys370 are joined by a disulfide bond. [4Fe-4S] cluster is bound by residues Cys134, Cys138, and Cys141. S-adenosyl-L-methionine contacts are provided by residues 187 to 188 (GE), Ser219, 241 to 243 (SLH), and Asn327. Cys370 serves as the catalytic S-methylcysteine intermediate.

The protein belongs to the radical SAM superfamily. RlmN family. [4Fe-4S] cluster serves as cofactor.

The protein localises to the cytoplasm. It carries out the reaction adenosine(2503) in 23S rRNA + 2 reduced [2Fe-2S]-[ferredoxin] + 2 S-adenosyl-L-methionine = 2-methyladenosine(2503) in 23S rRNA + 5'-deoxyadenosine + L-methionine + 2 oxidized [2Fe-2S]-[ferredoxin] + S-adenosyl-L-homocysteine. It catalyses the reaction adenosine(37) in tRNA + 2 reduced [2Fe-2S]-[ferredoxin] + 2 S-adenosyl-L-methionine = 2-methyladenosine(37) in tRNA + 5'-deoxyadenosine + L-methionine + 2 oxidized [2Fe-2S]-[ferredoxin] + S-adenosyl-L-homocysteine. In terms of biological role, specifically methylates position 2 of adenine 2503 in 23S rRNA and position 2 of adenine 37 in tRNAs. m2A2503 modification seems to play a crucial role in the proofreading step occurring at the peptidyl transferase center and thus would serve to optimize ribosomal fidelity. The sequence is that of Dual-specificity RNA methyltransferase RlmN from Xanthomonas oryzae pv. oryzae (strain MAFF 311018).